The chain runs to 47 residues: Photosystem II reaction center protein K (47 aa).

The propeptide occupies 1–10 (MAPLTLDLLA). A helical transmembrane segment spans residues 26 to 46 (LPLIPLLFFLLVFVWQAAVGF).

It belongs to the PsbK family. As to quaternary structure, PSII is composed of 1 copy each of membrane proteins PsbA, PsbB, PsbC, PsbD, PsbE, PsbF, PsbH, PsbI, PsbJ, PsbK, PsbL, PsbM, PsbT, PsbX, PsbY, Psb30/Ycf12, peripheral proteins PsbO, CyanoQ (PsbQ), PsbU, PsbV and a large number of cofactors. It forms dimeric complexes.

The protein resides in the cellular thylakoid membrane. In terms of biological role, one of the components of the core complex of photosystem II (PSII). PSII is a light-driven water:plastoquinone oxidoreductase that uses light energy to abstract electrons from H(2)O, generating O(2) and a proton gradient subsequently used for ATP formation. It consists of a core antenna complex that captures photons, and an electron transfer chain that converts photonic excitation into a charge separation. This Prochlorococcus marinus (strain SARG / CCMP1375 / SS120) protein is Photosystem II reaction center protein K.